The following is a 904-amino-acid chain: MNMIQNILRVILGSKFERDLKKLVPIVGQINSLEKEMKETSDSLLSSQTQKFRERIARGESLDSILPEAFATVREVSLRTMGMRHFDVQMMGGIALHRGNIAEMKTGEGKTLTSTLAVYLNSLAGKGVHVVTVNDYLAKRDANWMKPIYDFLGISVGVIQHDMDHEQRKIAYSADITYGTNNEFGFDYLRDNMVSHKDHKVQRSHFFAIVDEVDSILIDEARTPLIISGSSDETTDKYVRINKIIPKLVAIEDFEVDEKARNVLLSEKGVSHVEEILGIENLYAPENVDLVHHVHQALKAHKIFQKDVDYVVQNGEVIIVDEFTGRLMAGRRYSDGLHQALEAKESVTIAKESQTLASITFQNYFRMYDKLAGMTGTADTEAEEFRKIYDLDVIVIPPNVSVRRKDSPDRVYRTEKEKFDAILAEIRELQSKKQPVLVGTISIEKSEILSKMLSSAGIQHNVLNAKFHEREAEIVANAGKPGAVTIATNMAGRGTDIVLGGAQLYKENLETWKDDDDLVRRFKESILKQELDNAELLIREMDSSVKQKRASEILESVKIWKKNHEDVLVAGGLHILGTERHEARRIDNQLRGRSGRQGDPGSSRFYLSLQDDLMRIFGSDRISGLMKWANMPEGQEIESKMVSNAIARAQKRVEGHNFDIRKHLLEYDDVMNRQRIVIYKMRNEVLENEDISSLILSFIEEAVENQIVAHCEGNNPSSWNLDSLKEWLEGLELNLEINEEDFKKTKNPQLALFEKVNAAAKQKYEDRAESIGKDIWKLLERNIFLDILDHRWKEHLYSMDHLREGIWTVGYSERNPLVEYKLQGFRMFDVAIENLKNEVVNFLFRVEVSENSKLPEERREYKKVGQEVTGGFQELSSGTPSPTVTVTTSSGGGTERKTSRRRKR.

Residues glutamine 89, glycine 107–threonine 111, and aspartate 496 each bind ATP. The disordered stretch occupies residues glycine 870–arginine 904. Positions serine 876–serine 889 are enriched in low complexity.

This sequence belongs to the SecA family. Monomer and homodimer. Part of the essential Sec protein translocation apparatus which comprises SecA, SecYEG and auxiliary proteins SecDF. Other proteins may also be involved.

It is found in the cell inner membrane. The protein resides in the cytoplasm. The enzyme catalyses ATP + H2O + cellular proteinSide 1 = ADP + phosphate + cellular proteinSide 2.. In terms of biological role, part of the Sec protein translocase complex. Interacts with the SecYEG preprotein conducting channel. Has a central role in coupling the hydrolysis of ATP to the transfer of proteins into and across the cell membrane, serving as an ATP-driven molecular motor driving the stepwise translocation of polypeptide chains across the membrane. The sequence is that of Protein translocase subunit SecA from Leptospira borgpetersenii serovar Hardjo-bovis (strain JB197).